The sequence spans 692 residues: Mitogen-activated protein kinase kinase kinase 7-interacting protein 3 homolog (692 aa).

Residues 8 to 51 (LDIQVLNDLQQRFPEIPRDVVSQCMLQNNSNLDACYRALTQESC) enclose the CUE domain. Disordered stretches follow at residues 138-159 (NDQN…GVGT), 206-333 (YGTP…PYGP), and 349-427 (SQQR…VVMS). Composition is skewed to polar residues over residues 215 to 230 (PSQN…NTAW), 249 to 298 (QSFQ…QTSH), and 349 to 387 (SQQR…SGSP). The segment covering 409 to 422 (SQPPTTTGSPTPSS) has biased composition (low complexity). A coiled-coil region spans residues 496–580 (ALLLHQRARM…QKEIDLLQSR (85 aa)). Positions 598–662 (SPGPAVPPNT…SPRPGRDEDF (65 aa)) are disordered. The segment covering 608-620 (CKKESSETTSGER) has biased composition (basic and acidic residues). The segment at 662–692 (FEGSPWNCNSCTFLNHPALNRCEQCEMPRFT) adopts a RanBP2-type zinc-finger fold.

May play a role in signaling pathway. The chain is Mitogen-activated protein kinase kinase kinase 7-interacting protein 3 homolog (map3k7ip3) from Xenopus laevis (African clawed frog).